The primary structure comprises 215 residues: uncharacterized protein (215 aa).

Belongs to the mimivirus L31/R44 family.

This is an uncharacterized protein from Acanthamoeba polyphaga (Amoeba).